Consider the following 208-residue polypeptide: Large ribosomal subunit protein uL3 (208 aa).

A disordered region spans residues 117–149; it reads GFQGAIKRHGQSRGPMAHGSRYHRRPGSMGPVA.

It belongs to the universal ribosomal protein uL3 family. As to quaternary structure, part of the 50S ribosomal subunit. Forms a cluster with proteins L14 and L19.

Functionally, one of the primary rRNA binding proteins, it binds directly near the 3'-end of the 23S rRNA, where it nucleates assembly of the 50S subunit. This chain is Large ribosomal subunit protein uL3, found in Exiguobacterium sp. (strain ATCC BAA-1283 / AT1b).